Reading from the N-terminus, the 459-residue chain is Glutamate--tRNA ligase 1 (459 aa).

A 'HIGH' region motif is present at residues Pro-8–Asn-18. The 'KMSKS' region signature appears at Gly-249–Arg-253. Lys-252 contacts ATP.

The protein belongs to the class-I aminoacyl-tRNA synthetase family. Glutamate--tRNA ligase type 1 subfamily. In terms of assembly, monomer.

It localises to the cytoplasm. The catalysed reaction is tRNA(Glu) + L-glutamate + ATP = L-glutamyl-tRNA(Glu) + AMP + diphosphate. Functionally, catalyzes the attachment of glutamate to tRNA(Glu) in a two-step reaction: glutamate is first activated by ATP to form Glu-AMP and then transferred to the acceptor end of tRNA(Glu). This is Glutamate--tRNA ligase 1 from Bartonella quintana (strain Toulouse) (Rochalimaea quintana).